The chain runs to 428 residues: D-amino acid dehydrogenase (428 aa).

3–17 contributes to the FAD binding site; the sequence is VVILGSGVVGVASAY.

Belongs to the DadA oxidoreductase family. FAD serves as cofactor.

The catalysed reaction is a D-alpha-amino acid + A + H2O = a 2-oxocarboxylate + AH2 + NH4(+). The protein operates within amino-acid degradation; D-alanine degradation; NH(3) and pyruvate from D-alanine: step 1/1. Oxidative deamination of D-amino acids. The chain is D-amino acid dehydrogenase from Burkholderia mallei (strain NCTC 10247).